The following is a 1403-amino-acid chain: Sushi, nidogen and EGF-like domain-containing protein 1 (1403 aa).

The signal sequence occupies residues 1-24; the sequence is MRLGAAWALLLAAALGLGTRGVRA. Positions 103-258 constitute an NIDO domain; sequence AFWADVDNRR…GRWAFRIDDA (156 aa). EGF-like domains are found at residues 268-309, 311-347, and 349-385; these read TTSV…RRCH, DVNE…PTCE, and AQSP…ATCE. 18 disulfides stabilise this stretch: Cys-272-Cys-284, Cys-278-Cys-297, Cys-299-Cys-308, Cys-315-Cys-326, Cys-320-Cys-335, Cys-337-Cys-346, Cys-353-Cys-364, Cys-358-Cys-373, Cys-375-Cys-384, Cys-391-Cys-402, Cys-396-Cys-411, Cys-413-Cys-422, Cys-433-Cys-444, Cys-438-Cys-453, Cys-455-Cys-464, Cys-472-Cys-480, Cys-474-Cys-488, and Cys-490-Cys-499. N-linked (GlcNAc...) asparagine glycosylation is present at Asn-292. The EGF-like 4; calcium-binding domain maps to 387–423; the sequence is DVDECSSDPCQNGGSCVDLVGNYSCICVEPFEGPQCE. An N-linked (GlcNAc...) asparagine glycan is attached at Asn-408. EGF-like domains lie at 429-465 and 468-500; these read VPSP…LDCR and ILND…LLCE. N-linked (GlcNAc...) asparagine glycosylation occurs at Asn-484. N-linked (GlcNAc...) asparagine glycosylation is present at Asn-536. 4 EGF-like domains span residues 541-577, 580-616, 619-655, and 657-693; these read LPSP…RHCE, RPHL…RHCE, KPDS…RHCE, and APSP…HRCQ. Intrachain disulfides connect Cys-545/Cys-556, Cys-550/Cys-565, Cys-567/Cys-576, Cys-584/Cys-595, Cys-589/Cys-604, Cys-606/Cys-615, Cys-623/Cys-634, Cys-628/Cys-643, Cys-645/Cys-654, Cys-661/Cys-672, Cys-666/Cys-681, Cys-683/Cys-692, Cys-698/Cys-739, Cys-724/Cys-751, Cys-757/Cys-768, Cys-762/Cys-777, Cys-779/Cys-788, Cys-795/Cys-806, Cys-800/Cys-815, Cys-817/Cys-826, Cys-833/Cys-844, Cys-838/Cys-853, Cys-855/Cys-864, Cys-871/Cys-882, Cys-876/Cys-891, and Cys-893/Cys-902. The Sushi domain maps to 696 to 753; the sequence is VDCGHPEEVEHATMRFNGTHVGSVALYTCEPGFSLSALSHIRVCQPQGVWSQPPQCIE. Residue Asn-712 is glycosylated (N-linked (GlcNAc...) asparagine). Residues 753–789 form the EGF-like 11; calcium-binding domain; it reads EVDECRSQPCLHGGSCQDLIADYQCLCSPGYEGVHCE. One can recognise an EGF-like 12; calcium-binding domain in the interval 791–827; the sequence is ETDECQAQPCRNGGSCRDLPRAFICQCPEGFVGIHCE. EGF-like domains follow at residues 829-865 and 867-903; these read EVDA…YNCE and VSDP…KDCT. N-linked (GlcNAc...) asparagine glycosylation occurs at Asn-886. 3 Fibronectin type-III domains span residues 908 to 1006, 1007 to 1105, and 1106 to 1200; these read PPTA…TRPR, PIED…TRPL, and PPAN…SPRD. N-linked (GlcNAc...) asparagine glycans are attached at residues Asn-977, Asn-1015, Asn-1109, Asn-1139, and Asn-1298. Positions 1306–1342 constitute an EGF-like 15 domain; sequence TPGSCSEDACQNGGTCVPGADAHSCDCRPGFKGRHCE. 3 disulfides stabilise this stretch: Cys-1310–Cys-1321, Cys-1315–Cys-1330, and Cys-1332–Cys-1341.

In terms of processing, phosphorylated on serine and threonine residues. N-glycosylated. In terms of tissue distribution, expressed in lung.

It is found in the secreted. The protein localises to the extracellular space. It localises to the extracellular matrix. The polypeptide is Sushi, nidogen and EGF-like domain-containing protein 1 (Mus musculus (Mouse)).